We begin with the raw amino-acid sequence, 362 residues long: N-alpha-acetyltransferase 30 (362 aa).

Pro residues predominate over residues 1 to 20 (MAEVPPGPSSLLPPPAPPAP). Disordered stretches follow at residues 1-26 (MAEV…VEPR), 38-88 (CSED…NGLI), and 113-182 (ATTA…EEDE). 2 positions are modified to phosphoserine: serine 39 and serine 55. Positions 39 to 48 (SEDEEDDEEH) are enriched in acidic residues. Residue threonine 117 is modified to Phosphothreonine. The segment covering 149–165 (AVPSPVEAAAASDPAAA) has biased composition (low complexity). Residue serine 152 is modified to Phosphoserine. Residues 173 to 182 (TEQEEEEEDE) show a composition bias toward acidic residues. 3 positions are modified to phosphoserine: serine 190, serine 196, and serine 199. The region spanning 214–362 (RYVRYESELQ…DALRLKLWLR (149 aa)) is the N-acetyltransferase domain. An N6-acetyllysine modification is found at lysine 233.

This sequence belongs to the acetyltransferase family. MAK3 subfamily. Component of the N-terminal acetyltransferase C (NatC) complex, which is composed of NAA35, NAA38 and NAA30.

The protein localises to the cytoplasm. The protein resides in the nucleus. The catalysed reaction is N-terminal L-methionyl-L-leucyl-[protein] + acetyl-CoA = N-terminal N(alpha)-acetyl-L-methionyl-L-leucyl-[protein] + CoA + H(+). It catalyses the reaction N-terminal L-methionyl-L-isoleucyl-[protein] + acetyl-CoA = N-terminal N(alpha)-acetyl-L-methionyl-L-isoleucyl-[protein] + CoA + H(+). The enzyme catalyses N-terminal L-methionyl-L-phenylalanyl-[protein] + acetyl-CoA = N-terminal N(alpha)-acetyl-L-methionyl-L-phenylalanyl-[protein] + CoA + H(+). It carries out the reaction N-terminal L-methionyl-L-tryptophyl-[protein] + acetyl-CoA = N-terminal N(alpha)-acetyl-L-methionyl-L-tryptophyl-[protein] + CoA + H(+). The catalysed reaction is N-terminal L-methionyl-L-tyrosyl-[protein] + acetyl-CoA = N-terminal N(alpha)-acetyl-L-methionyl-L-tyrosyl-[protein] + CoA + H(+). Its function is as follows. Catalytic subunit of the N-terminal acetyltransferase C (NatC) complex. Catalyzes acetylation of the N-terminal methionine residues of peptides beginning with Met-Leu-Ala and Met-Leu-Gly. N-terminal acetylation protects proteins from ubiquitination and degradation by the N-end rule pathway. Necessary for the lysosomal localization and function of ARL8B sugeesting that ARL8B is a NatC substrate. The sequence is that of N-alpha-acetyltransferase 30 (NAA30) from Homo sapiens (Human).